The sequence spans 314 residues: L-lactate dehydrogenase (314 aa).

NAD(+) contacts are provided by residues Val17, Asp38, Lys43, Tyr69, and 83–84; that span reads GA. Substrate contacts are provided by Gln86 and Arg92. Residues Ser105, 122–124, and Ser147 each bind NAD(+); that span reads ASN. 124-127 contacts substrate; sequence NPVD. Substrate is bound at residue 152–155; it reads DSAR. Beta-D-fructose 1,6-bisphosphate is bound by residues Arg157 and His172. His179 serves as the catalytic Proton acceptor. Tyr223 carries the post-translational modification Phosphotyrosine. Thr232 contributes to the substrate binding site.

Belongs to the LDH/MDH superfamily. LDH family. As to quaternary structure, homotetramer.

Its subcellular location is the cytoplasm. The enzyme catalyses (S)-lactate + NAD(+) = pyruvate + NADH + H(+). The protein operates within fermentation; pyruvate fermentation to lactate; (S)-lactate from pyruvate: step 1/1. Its activity is regulated as follows. Allosterically activated by fructose 1,6-bisphosphate (FBP). Catalyzes the conversion of lactate to pyruvate. The chain is L-lactate dehydrogenase from Corynebacterium glutamicum (strain R).